The chain runs to 867 residues: Putative ubiquitin thioesterase L96 (867 aa).

Disordered regions lie at residues V49 to D73, I177 to K204, Y231 to R271, and L379 to G591. Composition is skewed to basic residues over residues S234 to G258 and K421 to R430. Composition is skewed to low complexity over residues P433–A462 and P472–S551. Polar residues predominate over residues I565–S575. Residues R582–G591 show a composition bias toward basic and acidic residues. The OTU domain maps to Y606 to L745. The active site involves D614. Residue C617 is the Nucleophile of the active site. Residue H738 is part of the active site.

The enzyme catalyses Thiol-dependent hydrolysis of ester, thioester, amide, peptide and isopeptide bonds formed by the C-terminal Gly of ubiquitin (a 76-residue protein attached to proteins as an intracellular targeting signal).. In terms of biological role, hydrolase that can remove conjugated ubiquitin from proteins and may therefore play an important regulatory role at the level of protein turnover by preventing degradation. May be involved in TIV genomic DNA packaging in a manner related to the Gag polyproteins of the mammalian viruses. This is Putative ubiquitin thioesterase L96 from Tipula iridescent virus (TIV).